The following is a 120-amino-acid chain: Secreted RxLR effector protein RXLR-C26 (120 aa).

An N-terminal signal peptide occupies residues 1–29 (MTGILCFPPFARFFMLLSGCAWLAGVSSG). The RxLR-dEER motif lies at 57-77 (RNLRGHINSAIIEANDTSEER). N-linked (GlcNAc...) asparagine glycosylation is present at Asn71.

The protein belongs to the RxLR effector family.

The protein localises to the secreted. It is found in the host cytoplasm. It localises to the host nucleus. In terms of biological role, secreted effector that does not suppress pattern-triggered immunity (PTI) in plant host. This Plasmopara halstedii (Downy mildew of sunflower) protein is Secreted RxLR effector protein RXLR-C26.